A 497-amino-acid chain; its full sequence is Cysteine--tRNA ligase (497 aa).

C32 contributes to the Zn(2+) binding site. A 'HIGH' region motif is present at residues 34 to 44 (PTVYGEGHLGH). Positions 228, 253, and 257 each coordinate Zn(2+). The short motif at 285–289 (KMGKS) is the 'KMSKS' region element. K288 contributes to the ATP binding site.

Belongs to the class-I aminoacyl-tRNA synthetase family. In terms of assembly, monomer. Zn(2+) is required as a cofactor.

The protein resides in the cytoplasm. It carries out the reaction tRNA(Cys) + L-cysteine + ATP = L-cysteinyl-tRNA(Cys) + AMP + diphosphate. The sequence is that of Cysteine--tRNA ligase from Cytophaga hutchinsonii (strain ATCC 33406 / DSM 1761 / CIP 103989 / NBRC 15051 / NCIMB 9469 / D465).